We begin with the raw amino-acid sequence, 504 residues long: Pyrichalasin C-7 hydroxylase (504 aa).

Positions 1–17 (MLNSAACIVLAITAVLG) are cleaved as a signal peptide. C449 contacts heme.

This sequence belongs to the cytochrome P450 family. Heme serves as cofactor.

It participates in mycotoxin biosynthesis. Its function is as follows. Cytochrome P450 monooxygenase; part of the gene cluster that mediates the biosynthesis of the mycotoxin pyrichalasin H, a tyrosine-derived cytochalasan that inhibits the growth of rice seedlings, but also inhibits lymphocyte capping and actin polymerization and alters cell morphology. Pyrichalasin H is indicated as the responsible agent for the genus-specific pathogenicity of M.grisea toward crabgrass. The first step in the pathway is catalyzed by the O-methyltransferase pyiA which methylates free tyrosine to generate the precursor O-methyltyrosine. The hybrid PKS-NRPS pyiS, assisted by the enoyl reductase pyiC, are responsible for fusion of the O-methyltyrosine precursor and the polyketide backbone. The polyketide synthase module (PKS) of pyiS is responsible for the synthesis of the polyketide backbone and the downstream nonribosomal peptide synthetase (NRPS) amidates the carboxyl end of the polyketide with the O-methyltyrosine precursor. As the NRPS A-domain demonstrates substrate tolerance, pyiS can also use phenylalanine, tyrosine and even para-chlorophenylalanine as amino acid precursor, which leads to the production of novel cytochalasans, including halogenated cytochalasans. Because pyiS lacks a designated enoylreductase (ER) domain, the required activity is provided the enoyl reductase pyiC. Reduction by the hydrolyase pyiE leads to 1,5-dihydropyrrolone, which is substrate for dehydration and intra-molecular Diels-Alder cyclization by the Diels-Alderase pyiF to yield the required isoindolone-fused macrocycle. The tailoring cytochrome P450 monooxygenases piyD and piyG catalyze the hydroxylation at C-18 and C-7, respectivily, whereas the short-chain dehydrogenase/reductase pyiH reduces the carbonyl at C-21 in preparation for the transfer of an acetyl group by the acetyltransferase pyiB. These 3 reactions whose order is not clear yet, lead to the production of O-methylpyrichalasin J, a deacetylated pyrichalasin H. Finally, pyiB to converts O-methylpyrichalasin J into the final product pyrichalasin H via acetylation of C-21. The chain is Pyrichalasin C-7 hydroxylase from Pyricularia grisea (Crabgrass-specific blast fungus).